The primary structure comprises 691 residues: Threonine--tRNA ligase (691 aa).

The 66-residue stretch at 1-66 folds into the TGS domain; that stretch reads MSAPARPAPA…DADVDVIPVT (66 aa). Residues 265–571 are catalytic; sequence DHRKLGVELD…LTEHYAGAFP (307 aa). Zn(2+) contacts are provided by C370, H421, and H548.

This sequence belongs to the class-II aminoacyl-tRNA synthetase family. Homodimer. Requires Zn(2+) as cofactor.

It is found in the cytoplasm. The enzyme catalyses tRNA(Thr) + L-threonine + ATP = L-threonyl-tRNA(Thr) + AMP + diphosphate + H(+). Its function is as follows. Catalyzes the attachment of threonine to tRNA(Thr) in a two-step reaction: L-threonine is first activated by ATP to form Thr-AMP and then transferred to the acceptor end of tRNA(Thr). Also edits incorrectly charged L-seryl-tRNA(Thr). In Mycolicibacterium vanbaalenii (strain DSM 7251 / JCM 13017 / BCRC 16820 / KCTC 9966 / NRRL B-24157 / PYR-1) (Mycobacterium vanbaalenii), this protein is Threonine--tRNA ligase.